We begin with the raw amino-acid sequence, 370 residues long: Biotin synthase (370 aa).

In terms of domain architecture, Radical SAM core spans 50–276 (FSDGTVDACS…IAVYRFLHPE (227 aa)). [4Fe-4S] cluster is bound by residues cysteine 68, cysteine 72, and cysteine 75. Cysteine 208 and arginine 280 together coordinate [2Fe-2S] cluster. Positions 328 to 370 (AGLEPNREANTFDPESVKARHRSPAAETASNANRTNATTETDD) are disordered. Over residues 352–370 (AAETASNANRTNATTETDD) the composition is skewed to low complexity.

This sequence belongs to the radical SAM superfamily. Biotin synthase family. Homodimer. [4Fe-4S] cluster serves as cofactor. [2Fe-2S] cluster is required as a cofactor.

It catalyses the reaction (4R,5S)-dethiobiotin + (sulfur carrier)-SH + 2 reduced [2Fe-2S]-[ferredoxin] + 2 S-adenosyl-L-methionine = (sulfur carrier)-H + biotin + 2 5'-deoxyadenosine + 2 L-methionine + 2 oxidized [2Fe-2S]-[ferredoxin]. The protein operates within cofactor biosynthesis; biotin biosynthesis; biotin from 7,8-diaminononanoate: step 2/2. In terms of biological role, catalyzes the conversion of dethiobiotin (DTB) to biotin by the insertion of a sulfur atom into dethiobiotin via a radical-based mechanism. The polypeptide is Biotin synthase (Natronomonas pharaonis (strain ATCC 35678 / DSM 2160 / CIP 103997 / JCM 8858 / NBRC 14720 / NCIMB 2260 / Gabara) (Halobacterium pharaonis)).